A 60-amino-acid polypeptide reads, in one-letter code: Metallothionein B (60 aa).

The segment at 1–28 is beta; sequence MDPCECSKTGSCNCGGSCKCSNCACTSC. Residues cysteine 4, cysteine 6, cysteine 12, cysteine 14, cysteine 18, cysteine 20, cysteine 23, cysteine 25, cysteine 28, cysteine 32, cysteine 33, cysteine 35, cysteine 36, cysteine 40, cysteine 43, cysteine 47, cysteine 49, cysteine 54, cysteine 58, and cysteine 59 each contribute to the a divalent metal cation site. The segment at 29–60 is alpha; it reads KKSCCPCCPSDCSKCASGCVCKGKTCDTSCCQ.

Belongs to the metallothionein superfamily. Type 1 family.

In terms of biological role, metallothioneins have a high content of cysteine residues that bind various heavy metals. The polypeptide is Metallothionein B (mtb) (Oncorhynchus mykiss (Rainbow trout)).